The chain runs to 258 residues: Imidazole glycerol phosphate synthase subunit HisF (258 aa).

Active-site residues include aspartate 11 and aspartate 130.

This sequence belongs to the HisA/HisF family. Heterodimer of HisH and HisF.

The protein localises to the cytoplasm. It catalyses the reaction 5-[(5-phospho-1-deoxy-D-ribulos-1-ylimino)methylamino]-1-(5-phospho-beta-D-ribosyl)imidazole-4-carboxamide + L-glutamine = D-erythro-1-(imidazol-4-yl)glycerol 3-phosphate + 5-amino-1-(5-phospho-beta-D-ribosyl)imidazole-4-carboxamide + L-glutamate + H(+). It functions in the pathway amino-acid biosynthesis; L-histidine biosynthesis; L-histidine from 5-phospho-alpha-D-ribose 1-diphosphate: step 5/9. IGPS catalyzes the conversion of PRFAR and glutamine to IGP, AICAR and glutamate. The HisF subunit catalyzes the cyclization activity that produces IGP and AICAR from PRFAR using the ammonia provided by the HisH subunit. The sequence is that of Imidazole glycerol phosphate synthase subunit HisF from Yersinia pestis (strain Pestoides F).